Here is a 334-residue protein sequence, read N- to C-terminus: GTPase Obg (334 aa).

The region spanning 1–159 (MRFVDEVVIK…KEVRLELNLL (159 aa)) is the Obg domain. One can recognise an OBG-type G domain in the interval 160-331 (ADVALLGLPN…LAKKLNEFLQ (172 aa)). GTP-binding positions include 166–173 (GLPNAGKS), 191–195 (FTTMY), 212–215 (DIPG), 282–285 (NKID), and 312–314 (SAA). Positions 173 and 193 each coordinate Mg(2+).

The protein belongs to the TRAFAC class OBG-HflX-like GTPase superfamily. OBG GTPase family. In terms of assembly, monomer. Mg(2+) serves as cofactor.

It is found in the cytoplasm. Its function is as follows. An essential GTPase which binds GTP, GDP and possibly (p)ppGpp with moderate affinity, with high nucleotide exchange rates and a fairly low GTP hydrolysis rate. Plays a role in control of the cell cycle, stress response, ribosome biogenesis and in those bacteria that undergo differentiation, in morphogenesis control. This Francisella tularensis subsp. tularensis (strain WY96-3418) protein is GTPase Obg.